The primary structure comprises 345 residues: Alkaline phosphatase isozyme conversion protein (345 aa).

Residues 1–24 (MFSALRHRTAALALGVCFILPVHA) form the signal peptide. Histidine 117, aspartate 143, glutamate 176, and aspartate 204 together coordinate Zn(2+).

This sequence belongs to the peptidase M28 family. M28C subfamily.

This protein, presumably an aminopeptidase, mediates the conversion of E.coli alkaline phosphatase isozyme 1, to isozymes 2 and 3 by removing, one by one, the two N-terminal arginine residues. The sequence is that of Alkaline phosphatase isozyme conversion protein (iap) from Escherichia coli (strain K12).